The following is a 606-amino-acid chain: DNA mismatch repair protein MutL (606 aa).

Positions 348–378 are disordered; the sequence is QPHAQRPQAPWSAETSPFRPYPPAAGFSERP.

Belongs to the DNA mismatch repair MutL/HexB family.

In terms of biological role, this protein is involved in the repair of mismatches in DNA. It is required for dam-dependent methyl-directed DNA mismatch repair. May act as a 'molecular matchmaker', a protein that promotes the formation of a stable complex between two or more DNA-binding proteins in an ATP-dependent manner without itself being part of a final effector complex. This is DNA mismatch repair protein MutL from Rhizobium etli (strain CIAT 652).